A 253-amino-acid polypeptide reads, in one-letter code: Putative glutamine amidotransferase PB2B2.05 (253 aa).

The region spanning 5–228 (IIALSVGFSN…INRSKWHMKQ (224 aa)) is the Glutamine amidotransferase type-1 domain. Cys-100 (nucleophile) is an active-site residue. Catalysis depends on residues His-200 and Glu-202.

It localises to the cytoplasm. The protein localises to the nucleus. The chain is Putative glutamine amidotransferase PB2B2.05 from Schizosaccharomyces pombe (strain 972 / ATCC 24843) (Fission yeast).